We begin with the raw amino-acid sequence, 333 residues long: Alpha-N-acetylgalactosaminide alpha-2,6-sialyltransferase 6 (333 aa).

Residues 1–12 (MACSRPPSQCDP) are compositionally biased toward polar residues. The interval 1–27 (MACSRPPSQCDPTTLPPGPPAGRWPLP) is disordered. Residues 1–43 (MACSRPPSQCDPTTLPPGPPAGRWPLPFSRRRREMSSNKEQRS) lie on the Cytoplasmic side of the membrane. Residues 44–64 (AVFVILFALITILILYSSNSA) traverse the membrane as a helical; Signal-anchor for type II membrane protein segment. Topologically, residues 65-333 (NEVFHYGSLR…GITFSHPSWT (269 aa)) are lumenal. A glycan (N-linked (GlcNAc...) asparagine) is linked at Asn98. Cysteines 108 and 256 form a disulfide.

It belongs to the glycosyltransferase 29 family. As to expression, widely expressed, the gene expression is most abundant in colon, brain, liver, and heart.

The protein resides in the golgi apparatus membrane. It carries out the reaction a ganglioside GM1b (d18:1(4E)) + CMP-N-acetyl-beta-neuraminate = a ganglioside GD1alpha (d18:1(4E)) + CMP + H(+). The enzyme catalyses a ganglioside GD1a (d18:1(4E)) + CMP-N-acetyl-beta-neuraminate = a ganglioside GT1aalpha (d18:1(4E)) + CMP + H(+). The catalysed reaction is a ganglioside GT1b (d18:1(4E)) + CMP-N-acetyl-beta-neuraminate = a ganglioside GQ1balpha (d18:1(4E)) + CMP + H(+). It catalyses the reaction N-acetyl-alpha-neuraminosyl-(2-&gt;3)-beta-D-galactosyl-(1-&gt;3)-N-acetyl-beta-D-glucosaminyl-(1-&gt;3)-beta-D-galactosyl-(1-&gt;4)-beta-D-glucosyl-(1&lt;-&gt;1')-N-acyl-sphing-4-enine + CMP-N-acetyl-beta-neuraminate = N-acetyl-alpha-neuraminosyl-(2-&gt;3)-beta-D-galactosyl-(1-&gt;3)-[N-acetyl-alpha-neuraminosyl-(2-&gt;6)]-N-acetyl-beta-D-glucosaminyl-(1-&gt;3)-beta-D-galactosyl-(1-&gt;4)-beta-D-glucosyl-(1&lt;-&gt;1')-N-acyl-sphing-4-enine + CMP + H(+). It carries out the reaction a globoside MSGG + CMP-N-acetyl-beta-neuraminate = a globoside DSGG + CMP + H(+). The enzyme catalyses 3-O-[alpha-Neu5Ac-(2-&gt;3)-beta-D-Gal-(1-&gt;3)-alpha-D-GalNAc]-L-Ser-[protein] + CMP-N-acetyl-beta-neuraminate = a 3-O-{alpha-Neu5Ac-(2-&gt;3)-beta-D-Gal-(1-&gt;3)-[alpha-Neu5Ac-(2-&gt;6)]-alpha-D-GalNAc}-L-seryl-[protein] + CMP + H(+). The catalysed reaction is 3-O-[alpha-Neu5Ac-(2-&gt;3)-beta-D-Gal-(1-&gt;3)-alpha-D-GalNAc]-L-Thr-[protein] + CMP-N-acetyl-beta-neuraminate = a 3-O-{alpha-Neu5Ac-(2-&gt;3)-beta-D-Gal-(1-&gt;3)-[alpha-Neu5Ac-(2-&gt;6)]-alpha-D-GalNAc}-L-threonyl-[protein] + CMP + H(+). Its function is as follows. Transfers the sialyl group (N-acetyl-alpha-neuraminyl or NeuAc) from CMP-NeuAc onto glycolipids, forming an alpha-2,6-linkage. Produces branched type disialyl structures by transfer of a sialyl group onto the GalNAc or GlcNAc residue inside backbone core chains having a terminal sialic acid with an alpha-2,3-linkage on Gal. ST6GalNAcVI prefers glycolipids to glycoproteins, predominantly catalyzing the biosynthesis of ganglioside GD1alpha from GM1b. Also has activity toward GD1a and GT1b, and can generate DSGG (disialylgalactosylgloboside) from MSGG (monosialylgalactosylgloboside). Besides GMb1, MSGG and other glycolipids, it shows activity towards sialyl Lc4Cer generating disialyl Lc4Cer, which can lead to the synthesis of disialyl Lewis a (Le(a)), suggested to be a cancer-associated antigen. The polypeptide is Alpha-N-acetylgalactosaminide alpha-2,6-sialyltransferase 6 (St6galnac6) (Mus musculus (Mouse)).